Consider the following 384-residue polypeptide: Early estrogen-induced gene 1 protein (384 aa).

The C2 NT-type domain maps to 2 to 145 (AFLMKKKKFK…ILKVTIGMFL (144 aa)). The segment at 129-138 (NTRQDNSILK) is required for interaction with TNFRSF11A/RANK. The disordered stretch occupies residues 173 to 315 (LTCKGGGTSS…RRKKDSVESH (143 aa)). Low complexity predominate over residues 183–193 (GGSSTNSLTGS). Polar residues predominate over residues 227–254 (SRNSSYASQQSKISGYSTEHSRSSSLSD). Basic and acidic residues-rich tracts occupy residues 280-292 (GSEREHRPPEKPP) and 299-315 (HLSDRSFRRKKDSVESH).

It belongs to the EEIG family. Part of a complex composed of EEIG1, TNFRSF11A/RANK, PLCG2, GAB2, TEC and BTK; complex formation increases in the presence of TNFSF11/RANKL. Interacts with PRDM1/BLIMP1; following TNFSF11/RANKL stimulation in bone marrow-derived macrophages, the interaction promotes the binding of PRDM1/BLIMP1 to the gene promoter of IRF8.

It localises to the nucleus. It is found in the cytoplasm. Its subcellular location is the membrane raft. Key component of TNFSF11/RANKL- and TNF-induced osteoclastogenesis pathways, thereby mediates bone resorption in pathological bone loss conditions. Required for TNFSF11/RANKL-induced osteoclastogenesis via its interaction with TNFRSF11A/RANK, thereby facilitates the downsteam transcription of NFATC1 and activation of PLCG2. Facilitates recruitment of the transcriptional repressor PRDM1/BLIMP1 to the promoter of the anti-osteoclastogenesis gene IRF8, thereby resulting in transcription of osteoclast differentiation factors. May play a role in estrogen action. The sequence is that of Early estrogen-induced gene 1 protein from Homo sapiens (Human).